Consider the following 520-residue polypeptide: Basal body-orientation factor 1 (520 aa).

Over residues 1-21 (MPKKKGKGKGKGKGKGKGKKD) the composition is skewed to basic residues. The interval 1 to 34 (MPKKKGKGKGKGKGKGKGKKDGKHDSKADRESEI) is disordered. The span at 22–34 (GKHDSKADRESEI) shows a compositional bias: basic and acidic residues. Coiled coils occupy residues 27–175 (KADR…REKM) and 245–386 (VKEA…RQEA). The tract at residues 468 to 492 (AHPPALSASSSEKIQVSSDAGSTVE) is disordered. The segment covering 469–478 (HPPALSASSS) has biased composition (low complexity). Over residues 479–492 (EKIQVSSDAGSTVE) the composition is skewed to polar residues.

This sequence belongs to the BBOF1 family.

Its subcellular location is the cytoplasm. It is found in the cytoskeleton. It localises to the cilium basal body. Its function is as follows. Basal body protein required in multiciliate cells to align and maintain cilia orientation in response to flow. May act by mediating a maturation step that stabilizes and aligns cilia orientation. Not required to respond to planar cell polarity (PCP) or flow-based orientation cues. The protein is Basal body-orientation factor 1 of Danio rerio (Zebrafish).